The primary structure comprises 500 residues: Autophagy-related protein 18 (500 aa).

One copy of the WD 1 repeat lies at 3-41 (DSSPTINFINFNQTGTCISLGTSKGFKIFNCEPFGKFYS). The disordered stretch occupies residues 174-197 (VGGNTETSFKRDQQDAGHSDISDL). Residues 181–194 (SFKRDQQDAGHSDI) show a composition bias toward basic and acidic residues. 2 WD repeats span residues 243–283 (AHKG…KIYQ) and 288–327 (TYAT…SNNK). The L/FRRG motif motif lies at 284–288 (FRRGT). Residues 328 to 358 (LDSDDSNMEEAAADDSSLDTTSIDALSDEEN) form a disordered region. The span at 331–344 (DDSNMEEAAADDSS) shows a compositional bias: acidic residues. Ser-354 is modified (phosphoserine).

This sequence belongs to the WD repeat PROPPIN family. In terms of assembly, component of the PI(3,5)P2 regulatory complex, composed of ATG18, FIG4, FAB1, VAC14 and VAC7. VAC14 nucleates the assembly of the complex and serves as a scaffold. Interacts with ATG2, ATG9 and VAC17. The ATG2-ATG18 complex is essential for autophagosome formation.

It is found in the preautophagosomal structure membrane. The protein resides in the vacuole membrane. The protein localises to the endosome membrane. Functionally, the PI(3,5)P2 regulatory complex regulates both the synthesis and turnover of phosphatidylinositol 3,5-bisphosphate (PtdIns(3,5)P2). May negatively regulate FAB1 activity by sequestering or masking VAC7 from FAB1. Necessary for proper vacuole morphology. Plays an important role in osmotically-induced vacuole fragmentation. Required for cytoplasm to vacuole transport (Cvt) vesicle formation, pexophagy and starvation-induced autophagy. Involved in correct ATG9 trafficking to the pre-autophagosomal structure. Might also be involved in premeiotic DNA replication. With ATG2, protects ATG8 from ARG4-mediated cleavage. The chain is Autophagy-related protein 18 (ATG18) from Saccharomyces cerevisiae (strain YJM789) (Baker's yeast).